The primary structure comprises 87 residues: Candoxin (87 aa).

Positions 1 to 21 are cleaved as a signal peptide; sequence MKTLLLTLVVVTIVCLDLGYT. 5 disulfide bridges follow: cysteine 24–cysteine 47, cysteine 27–cysteine 32, cysteine 40–cysteine 64, cysteine 68–cysteine 80, and cysteine 81–cysteine 86.

Expressed by the venom gland.

The protein resides in the secreted. Functionally, binds and inhibits muscular and neuronal nicotinic acetylcholine receptors (nAChR). Is a reversible antagonist of muscle nAChR (alpha-1-beta-1-delta-epsilon/CHRNA1-CHRNB1-CHRND-CHRNE) (IC(50)=10 nM) and a potent and poorly reversible antagonist of the neuronal alpha-7/CHRNA7 nAChR (IC(50)=50 nM). May exhibit differential affinities for the two binding sites on the muscle nAChR. This chain is Candoxin, found in Bungarus candidus (Malayan krait).